Consider the following 56-residue polypeptide: Ferredoxin (56 aa).

4Fe-4S ferredoxin-type domains lie at 2–28 and 29–56; these read AYKIADSCVSCGACASECPVNAISQGD and SIFVIDADTCIDCGNCANVCPVGAPVQE. C9, C12, C15, C19, C38, C41, C44, and C48 together coordinate [4Fe-4S] cluster.

Requires [4Fe-4S] cluster as cofactor.

Functionally, ferredoxins are iron-sulfur proteins that transfer electrons in a wide variety of metabolic reactions. This chain is Ferredoxin, found in Clostridium pasteurianum.